We begin with the raw amino-acid sequence, 1913 residues long: MGNSYAGQLKSARFEEALHNSIEASLRCSTAVPRPIFSQLYLDPDQHPFSTADVKPKVEDLDKDLVHPYTQNGSVDFSHNVAMNEMEDDEDEEEMSDSNSPPIPYSQKPAPEGSCTTDGFCQAGKDLRLVSLCMEQIDIPAGFLLVGAKSPNLPEHILVCAVDKRFLPDDHGKNALLGFSGNCIGCGERGFRYFTEFSNHINLKLTTQPKKQKHLKYYLVRTSQGVLSKGPLICWKECRSRQSSALCHSTKPISSVSSAVAPENGTANGYKAGFTVTEAANGTSGHGGKSSSCSSTPSRPGNYSLSPRPTFTSVDQANMFISGPPKKRHRGWYPGSPVSQSALVVPAPTVRPLSRTEPLLSTPVPQTPLTGILQPRPVLAGETVIVPENLLSNSGVRPVILIGYGTLPYFYGNVGDIVVSPLLVNCYKIPQLENKDLEQLGLTSTHLLSVENMILLTIQYLVRLGPDQIPLREEFEQIMLTAMQEFSVRERALPLGAPCAPMSPAQLPWLARLAASVSQDLVHVIVTQNSLAEGISETLRLLSEMKHYQRLPDYVVAICASKIRGNEFCVVVLGQHQSRALAESMLTTSEFLKEISYELITGKVSFLASHFKTTSLGDDLDKLLEKMQQRRGDSVVTPFNGDLDECVSPQEAAAMIPTQNLDVDNETFQIYQPQLTVARRLLSQVCAIADSGSQSLDLGHFSKVDFIIIVPRSEVLVQQTLQRVRQSGVLVDLGLEESGLAHQRAERYVVRLDNEIQSKFEVFMRRVKQNPYTLFVLVHDNSHVELTSVISGSLSHGEPTHGLADRVINCREVLEAFNLLVLQVSSFPYTLQTQQSRISSSNEVHWIQLDTMEDAGCEKLYFGLDEYSKSLQWGITSPLLRCDETFEKMVSTLLERYPRLHSMVVRCYLLIQQYSEALMALTTMASLRDHSTPETLSIMDDLITSPGKNKSGKGHMLVIRVPSVQLAMLAKERLQEVRDKLGLQYRFEIILGSPASELTVETHFVTRLKTWRGNDQDEWIPRTYQDLEGLPCIVILTGKDPLGETFPRSLKYCDLRLIDSSYLTRTALEQEVGLACCYVSKEVIRGPAAALDLSAKEAERVPASENDSEELLIDLERPQSNSSAVTGTSGSIMENGVSSSSTAGKPQQQLLTPTSSIRLDEGVSASTAVVGEILKQECDSLDPPMASSTTSKPSSSSSSSAQALAWSRQPRGLHTALPPVIILSKAAYSLLGSQKGGRLPSSSSLLPHADVAWVSSLRPGLHKDMSSEEQSLYYRQWTSARQHHADYSNQPDPISGARTLHPRRLLLTGPPQVGKTGSYLQFLRILFRMLIRLLEVDVYNEEEINTDHSDDSELSQSEGEPWPDIETFSKMPFDVSVHDPKYRLMSLVYSEKLAGIKQEVIKEYKVEEPRQRETMSMMLTQYAAYNTFHHCEQCQQYMAFTPASQMSDSTLHAFTFSSSMLGEEVQLYFIIPKSKESHFVFSKQGRHLESMRLPLVSDKNLNAVKSPIFTPSSGRHEHGLLNLFHAMEGISHLHLLVVKEYEMPLYRKYWPNHIMLVLPGMFNNAGVGAARFLIKELSYHNLELERNRLEELGVKRQCVWPFIVVMDDSCVLWNIHSVQEQTSQPTEAGISSKNVSLKSVLQHIEATPKIIHYAILGIQKWNSKLTSQSLKAPFSRCHVHDFILLNIDLTQNVQYDFNRYFCEDVDFNLRTNSSGLLICRFNNFSLMKKHVQVGGQRDFIIKPKLMVSENVVPILPLQYVCAPDSEHTLLAAPAQFLLEKFLQHASYKLFPKAIHNFKSPVLAIDCYLNIGQEVAICYVSSRPHSSNVNCEGVFFSGLLLYLCDSFVGADLLKKFKFLKGATLCVICQDRSSLRQTIVRLELEDEWQFRLRDEFQTANSSDDKPLYFLTGRHV.

Over residues 86-96 (MEDDEDEEEMS) the composition is skewed to acidic residues. Disordered stretches follow at residues 86 to 111 (MEDD…KPAP), 281 to 309 (NGTS…SPRP), 1097 to 1157 (EAER…TSSI), and 1179 to 1207 (DSLD…LAWS). The segment covering 289 to 301 (KSSSCSSTPSRPG) has biased composition (low complexity). The segment covering 1118 to 1157 (PQSNSSAVTGTSGSIMENGVSSSSTAGKPQQQLLTPTSSI) has biased composition (polar residues). Residues 1187–1200 (SSTTSKPSSSSSSS) show a composition bias toward low complexity. Residues 1832 to 1852 (GVFFSGLLLYLCDSFVGADLL) form a helical membrane-spanning segment.

Belongs to the GREB1 family. Expressed in the inner ear, with a high presence in the spiral ganglia, cochlear nerve bundles, and hair cells.

It is found in the membrane. Functionally, plays a major role in early metanephros and genital development. The protein is GREB1-like protein (Greb1l) of Mus musculus (Mouse).